Consider the following 403-residue polypeptide: MSKKVEVNKVVVAYSGGLDTSVIIPWLKENYNCEVIAFVADVGQGEEELEGIEAKAIASGATECYIADLKEEMVSEYIFPTLKTGALYEGKYLLGTSMARPIIAKAQVEVARNVGADALCHGCTGKGNDQIRFEGAFAALAPDLHVIAPWREWDLVSREECLDYLAERNIPCTASLTKIYSRDANAWHISTEGGVLEETWNAPNDDCWAWTVDPEQAPNESETISLKVEKGAVVAVDGKAMTPYEVVVYLNEKGAKHGVGRIDIVENRLVGMKSRGCYETPGGTIINEALRAVEQLVLDKTSFEFREELGIKASHLVYDGRWFTPLCKSILAASEELAKDVNGEVVIKLYKGHATVIQKRSDNSLYSEEFATFGADEVYDQSHAEGFIRLYSLSSRIRALNSK.

ATP is bound by residues 13 to 21 (AYSGGLDTS) and Ala-40. L-citrulline contacts are provided by Tyr-92 and Ser-97. Gly-122 lines the ATP pocket. L-aspartate contacts are provided by Thr-124, Asn-128, and Asp-129. Asn-128 contributes to the L-citrulline binding site. Residues Arg-132, Ser-181, Ser-190, Glu-266, and Tyr-278 each coordinate L-citrulline.

Belongs to the argininosuccinate synthase family. Type 1 subfamily. As to quaternary structure, homotetramer.

It localises to the cytoplasm. It carries out the reaction L-citrulline + L-aspartate + ATP = 2-(N(omega)-L-arginino)succinate + AMP + diphosphate + H(+). It participates in amino-acid biosynthesis; L-arginine biosynthesis; L-arginine from L-ornithine and carbamoyl phosphate: step 2/3. The protein is Argininosuccinate synthase of Aliivibrio fischeri (strain MJ11) (Vibrio fischeri).